Consider the following 285-residue polypeptide: RNA polymerase sigma factor RpoH (285 aa).

The tract at residues 53-122 (LILSHLRFVV…IHEYVLRNWR (70 aa)) is sigma-70 factor domain-2. An Interaction with polymerase core subunit RpoC motif is present at residues 77–80 (DLIQ). The sigma-70 factor domain-4 stretch occupies residues 229 to 281 (AMEGLDERSQDIIRARWLDEDNKSTLQELADRYGVSAERVRQLEKNAMKKLRA). A DNA-binding region (H-T-H motif) is located at residues 254–273 (LQELADRYGVSAERVRQLEK).

Belongs to the sigma-70 factor family. RpoH subfamily. Interacts with the RNA polymerase core enzyme.

It is found in the cytoplasm. Its function is as follows. Sigma factors are initiation factors that promote the attachment of RNA polymerase to specific initiation sites and are then released. This sigma factor is involved in regulation of expression of heat shock genes. The protein is RNA polymerase sigma factor RpoH of Enterobacter cloacae.